Reading from the N-terminus, the 162-residue chain is MRISKPHLRSVSIQCYLCLLLNSHFLTEAGIHVFILGCFSAGLPKTEANWVNVISDLKKIEDLIQSMHIDATLYTESDVHPSCKVTAMKCFLLELQVISHESGDTDIHDTVENLIILANNILSSNGNITESGCKECEELEEKNIKEFLQSFVHIVQMFINAS.

A signal peptide spans 1–29 (MRISKPHLRSVSIQCYLCLLLNSHFLTEA). A propeptide spanning residues 30–48 (GIHVFILGCFSAGLPKTEA) is cleaved from the precursor. 2 disulfides stabilise this stretch: Cys-83–Cys-133 and Cys-90–Cys-136. N-linked (GlcNAc...) asparagine glycosylation occurs at Asn-127.

The protein belongs to the IL-15/IL-21 family.

The protein resides in the secreted. In terms of biological role, cytokine that plays a major role in the development of inflammatory and protective immune responses to microbial invaders and parasites by modulating immune cells of both the innate and adaptive immune systems. Stimulates the proliferation of natural killer cells, T-cells and B-cells and promotes the secretion of several cytokines. In monocytes, induces the production of IL8 and monocyte chemotactic protein 1/CCL2, two chemokines that attract neutrophils and monocytes respectively to sites of infection. Unlike most cytokines, which are secreted in soluble form, IL15 is expressed in association with its high affinity IL15RA on the surface of IL15-producing cells and delivers signals to target cells that express IL2RB and IL2RG receptor subunits. Binding to its receptor triggers the phosphorylation of JAK1 and JAK3 and the recruitment and subsequent phosphorylation of signal transducer and activator of transcription-3/STAT3 and STAT5. In mast cells, induces the rapid tyrosine phosphorylation of STAT6 and thereby controls mast cell survival and release of cytokines such as IL4. This Macaca thibetana (Pere David's macaque) protein is Interleukin-15 (IL15).